The following is a 386-amino-acid chain: Orphan methyltransferase M.SssI (386 aa).

Residues 11–386 (LRVFEAFAGI…LEAIIDKIGG (376 aa)) enclose the SAM-dependent MTase C5-type domain. Cys141 is an active-site residue.

The protein belongs to the class I-like SAM-binding methyltransferase superfamily. C5-methyltransferase family.

The enzyme catalyses a 2'-deoxycytidine in DNA + S-adenosyl-L-methionine = a 5-methyl-2'-deoxycytidine in DNA + S-adenosyl-L-homocysteine + H(+). Its function is as follows. This de novo methylase acts completely and exclusively on CG residues in DNA; methylates unmethylated and hemi-methylated DNA. The sequence is that of Orphan methyltransferase M.SssI (sssIM) from Spiroplasma monobiae (strain ATCC 33825 / MQ-1).